The primary structure comprises 85 residues: Large ribosomal subunit protein eL43 (85 aa).

The Zn(2+) site is built by Cys32, Cys35, Cys50, and Cys53. The C4-type zinc-finger motif lies at Cys32–Cys53.

This sequence belongs to the eukaryotic ribosomal protein eL43 family. As to quaternary structure, component of the large ribosomal subunit.

Its subcellular location is the cytoplasm. Its function is as follows. Component of the large ribosomal subunit. The ribosome is a large ribonucleoprotein complex responsible for the synthesis of proteins in the cell. The chain is Large ribosomal subunit protein eL43 (rpl37a) from Myxine glutinosa (Atlantic hagfish).